A 270-amino-acid chain; its full sequence is NAD(P)H-hydrate epimerase (270 aa).

A YjeF N-terminal domain is found at 25 to 234 (FQQLMDLMQN…DLLAPEAIYQ (210 aa)). Position 73 to 77 (73 to 77 (DNGGQ)) interacts with (6S)-NADPHX. Asparagine 74 and aspartate 144 together coordinate K(+). (6S)-NADPHX-binding positions include 148–154 (GVGLYGH) and glutamate 177. Threonine 180 is a binding site for K(+).

This sequence belongs to the NnrE/AIBP family. K(+) serves as cofactor.

It catalyses the reaction (6R)-NADHX = (6S)-NADHX. The catalysed reaction is (6R)-NADPHX = (6S)-NADPHX. In terms of biological role, catalyzes the epimerization of the S- and R-forms of NAD(P)HX, a damaged form of NAD(P)H that is a result of enzymatic or heat-dependent hydration. This is a prerequisite for the S-specific NAD(P)H-hydrate dehydratase to allow the repair of both epimers of NAD(P)HX. This is NAD(P)H-hydrate epimerase from Legionella pneumophila (strain Corby).